The following is a 357-amino-acid chain: Embryonic growth/differentiation factor 1 (357 aa).

A signal peptide spans 1–23 (MLPVCHRFCDHLLLLLLLPSTTL). Residues 24–237 (APAPASMGPA…RLCPLPRLRR (214 aa)) constitute a propeptide that is removed on maturation. N-linked (GlcNAc...) asparagine glycosylation occurs at Asn191. Intrachain disulfides connect Cys251/Cys322, Cys280/Cys354, and Cys284/Cys356.

It belongs to the TGF-beta family. In terms of assembly, homodimer; disulfide-linked. As to expression, expressed almost exclusively in the nervous system.

The protein resides in the secreted. In terms of biological role, may mediate cell differentiation events during embryonic development. The sequence is that of Embryonic growth/differentiation factor 1 (Gdf1) from Mus musculus (Mouse).